We begin with the raw amino-acid sequence, 710 residues long: Adenylosuccinate synthetase (710 aa).

2 disordered regions span residues 1–51 (MPVR…PVPQ) and 84–111 (DEPPHGSQKSLSVAPYTANASSSSGRSK). Composition is skewed to polar residues over residues 10 to 27 (YNNSSPGVSNALSPSTTA) and 101 to 111 (ANASSSSGRSK). Residues 180–186 (GDEGKGK) and 210–212 (GHT) each bind GTP. Catalysis depends on D181, which acts as the Proton acceptor. The Mg(2+) site is built by D181 and G210. IMP contacts are provided by residues 181 to 184 (DEGK), 208 to 211 (NAGH), T295, K309, Q421, T437, and K567. H211 serves as the catalytic Proton donor. Residue 563 to 569 (AVTKKPR) coordinates substrate. GTP contacts are provided by residues R569 and 697-699 (GNG).

The protein belongs to the adenylosuccinate synthetase family. As to quaternary structure, homodimer. It depends on Mg(2+) as a cofactor.

The protein resides in the cytoplasm. The enzyme catalyses IMP + L-aspartate + GTP = N(6)-(1,2-dicarboxyethyl)-AMP + GDP + phosphate + 2 H(+). It functions in the pathway purine metabolism; AMP biosynthesis via de novo pathway; AMP from IMP: step 1/2. Its function is as follows. Plays an important role in the salvage pathway for purine nucleotide biosynthesis. Catalyzes the first committed step in the biosynthesis of AMP from IMP. The chain is Adenylosuccinate synthetase from Leishmania infantum.